Reading from the N-terminus, the 565-residue chain is Adenine deaminase (565 aa).

This sequence belongs to the metallo-dependent hydrolases superfamily. Adenine deaminase family. Mn(2+) serves as cofactor.

It catalyses the reaction adenine + H2O + H(+) = hypoxanthine + NH4(+). This Lactobacillus delbrueckii subsp. bulgaricus (strain ATCC 11842 / DSM 20081 / BCRC 10696 / JCM 1002 / NBRC 13953 / NCIMB 11778 / NCTC 12712 / WDCM 00102 / Lb 14) protein is Adenine deaminase.